Here is a 477-residue protein sequence, read N- to C-terminus: Ribulose bisphosphate carboxylase large chain (477 aa).

The propeptide occupies 1–2 (MS). An N-acetylproline modification is found at proline 3. Lysine 14 bears the N6,N6,N6-trimethyllysine mark. Substrate is bound by residues asparagine 123 and threonine 173. The Proton acceptor role is filled by lysine 175. Residue lysine 177 coordinates substrate. The Mg(2+) site is built by lysine 201, aspartate 203, and glutamate 204. Residue lysine 201 is modified to N6-carboxylysine. The Proton acceptor role is filled by histidine 294. 3 residues coordinate substrate: arginine 295, histidine 327, and serine 379.

The protein belongs to the RuBisCO large chain family. Type I subfamily. Heterohexadecamer of 8 large chains and 8 small chains; disulfide-linked. The disulfide link is formed within the large subunit homodimers. Mg(2+) is required as a cofactor. In terms of processing, the disulfide bond which can form in the large chain dimeric partners within the hexadecamer appears to be associated with oxidative stress and protein turnover.

It is found in the plastid. The protein localises to the chloroplast. The catalysed reaction is 2 (2R)-3-phosphoglycerate + 2 H(+) = D-ribulose 1,5-bisphosphate + CO2 + H2O. The enzyme catalyses D-ribulose 1,5-bisphosphate + O2 = 2-phosphoglycolate + (2R)-3-phosphoglycerate + 2 H(+). RuBisCO catalyzes two reactions: the carboxylation of D-ribulose 1,5-bisphosphate, the primary event in carbon dioxide fixation, as well as the oxidative fragmentation of the pentose substrate in the photorespiration process. Both reactions occur simultaneously and in competition at the same active site. The sequence is that of Ribulose bisphosphate carboxylase large chain (rbcL) from Solanum lycopersicum (Tomato).